The sequence spans 446 residues: tRNA wybutosine-synthesizing protein 2 homolog (446 aa).

S-adenosyl-L-methionine-binding positions include serine 208, lysine 215, glutamate 255, and 283-284; that span reads DN.

It belongs to the class I-like SAM-binding methyltransferase superfamily. TRM5/TYW2 family.

It catalyses the reaction 4-demethylwyosine(37) in tRNA(Phe) + S-adenosyl-L-methionine = 4-demethyl-7-[(3S)-3-amino-3-carboxypropyl]wyosine(37) in tRNA(Phe) + S-methyl-5'-thioadenosine + H(+). The protein operates within tRNA modification; wybutosine-tRNA(Phe) biosynthesis. Functionally, S-adenosyl-L-methionine-dependent transferase that acts as a component of the wybutosine biosynthesis pathway. Wybutosine is a hyper modified guanosine with a tricyclic base found at the 3'-position adjacent to the anticodon of eukaryotic phenylalanine tRNA. Catalyzes the transfer of the alpha-amino-alpha-carboxypropyl (acp) group from S-adenosyl-L-methionine to the C-7 position of 4-demethylwyosine (imG-14) to produce wybutosine-86. This chain is tRNA wybutosine-synthesizing protein 2 homolog (Trmt12), found in Mus musculus (Mouse).